The chain runs to 511 residues: Intermediate cleaving peptidase 55 (511 aa).

Aspartate 327, aspartate 338, histidine 417, glutamate 444, and glutamate 467 together coordinate Mn(2+).

It belongs to the peptidase M24B family. Requires Mn(2+) as cofactor.

The protein resides in the nucleus. The protein localises to the mitochondrion inner membrane. It catalyses the reaction The enzyme cleaves the 36-Pro-Pro-37 bond of cysteine desulfurase (EC 2.8.1.7) removing three amino acid residues (Tyr-Ser-Pro) from the N-terminus after cleavage by mitochondrial processing peptidase.. Its function is as follows. Aminopeptidase which cleaves preprotein intermediates that carry destabilizing N-ter amino acid residues after the mitochondrial processing peptidase (MPP) cleavage site and is thus critical for stabilization of the mitochondrial proteome. The sequence is that of Intermediate cleaving peptidase 55 (ICP55) from Saccharomyces cerevisiae (strain ATCC 204508 / S288c) (Baker's yeast).